The primary structure comprises 259 residues: Tryptophan synthase alpha chain (259 aa).

Residues E35 and D46 each act as proton acceptor in the active site.

It belongs to the TrpA family. In terms of assembly, tetramer of two alpha and two beta chains.

It catalyses the reaction (1S,2R)-1-C-(indol-3-yl)glycerol 3-phosphate + L-serine = D-glyceraldehyde 3-phosphate + L-tryptophan + H2O. Its pathway is amino-acid biosynthesis; L-tryptophan biosynthesis; L-tryptophan from chorismate: step 5/5. The alpha subunit is responsible for the aldol cleavage of indoleglycerol phosphate to indole and glyceraldehyde 3-phosphate. In Methanococcus maripaludis (strain C7 / ATCC BAA-1331), this protein is Tryptophan synthase alpha chain.